Consider the following 162-residue polypeptide: MGLETEKADVQLFMDDDSYSRHSSVDYADPDKFVDPGSDRDPHRLNSHLKVGFEDVIAEPVSTHSFDKVWICSHALFEMSKYVIYKFLTVFLAIPLAFAAGILFATLSCLHIWIIMPFVKTCLMVLPSVQTIWKSVTDVVIAPLCTSIGRSFSSVSLQLSHD.

Topologically, residues 1 to 86 are cytoplasmic; the sequence is MGLETEKADV…FEMSKYVIYK (86 aa). Tyr-19 carries the phosphotyrosine; by SRC modification. 2 positions are modified to phosphoserine: Ser-20 and Ser-23. A Phosphotyrosine; by SRC modification is found at Tyr-27. The helical intramembrane region spans 87-107; it reads FLTVFLAIPLAFAAGILFATL. Over 108–162 the chain is Cytoplasmic; sequence SCLHIWIIMPFVKTCLMVLPSVQTIWKSVTDVVIAPLCTSIGRSFSSVSLQLSHD.

It belongs to the caveolin family. As to quaternary structure, monomer or homodimer. Interacts with CAV1; the interaction forms a stable heterooligomeric complex that is required for targeting to lipid rafts and for caveolae formation. Tyrosine phosphorylated forms do not form heterooligomers with the Tyr-19-phosphorylated form existing as a monomer or dimer, and the Tyr-27-form as a monomer only. Interacts (tyrosine phosphorylated form) with the SH2 domain-containing proteins, RASA1, NCK1 and SRC. Interacts (tyrosine phosphorylated form) with INSR, the interaction (Tyr-27-phosphorylated form) is increased on insulin stimulation. Interacts (Tyr-19 phosphorylated form) with MAPK1 (phosphorylated form); the interaction, promoted by insulin, leads to nuclear location and MAPK1 activation. Interacts with STAT3; the interaction is increased on insulin-induced tyrosine phosphorylation leading to STAT activation. Post-translationally, phosphorylated on serine and tyrosine residues. CAV1 promotes phosphorylation on Ser-23 which then targets the complex to the plasma membrane, lipid rafts and caveolae. Phosphorylation on both Tyr-19 and Tyr-27 is required for insulin-induced 'Ser-727' phosphorylation of STAT3 and its activation. Phosphorylation on Tyr-19 is required for insulin-induced phosphorylation of MAPK1 and DNA binding of STAT3. Tyrosine phosphorylation is induced by both EGF and insulin. In terms of tissue distribution, expressed in aortic endothelial cells.

It is found in the nucleus. Its subcellular location is the cytoplasm. It localises to the golgi apparatus membrane. The protein localises to the cell membrane. The protein resides in the membrane. It is found in the caveola. May act as a scaffolding protein within caveolar membranes. Interacts directly with G-protein alpha subunits and can functionally regulate their activity. Acts as an accessory protein in conjunction with CAV1 in targeting to lipid rafts and driving caveolae formation. Positive regulator of cellular mitogenesis of the MAPK signaling pathway. Required for the insulin-stimulated nuclear translocation and activation of MAPK1 and STAT3, and the subsequent regulation of cell cycle progression. This Bos taurus (Bovine) protein is Caveolin-2 (CAV2).